A 375-amino-acid polypeptide reads, in one-letter code: Enoyl-[acyl-carrier-protein] reductase [NADH] 1, chloroplastic (375 aa).

The N-terminal 67 residues, 1 to 67 (MGASAATGMQ…SSKRSGVAIR (67 aa)), are a transit peptide targeting the chloroplast. NAD(+)-binding positions include glycine 91, tyrosine 98, 155–156 (DA), 202–203 (SL), and leucine 252. Catalysis depends on proton acceptor residues tyrosine 254 and tyrosine 264. NAD(+)-binding positions include lysine 272 and 302-306 (LGSRA).

Belongs to the short-chain dehydrogenases/reductases (SDR) family. FabI subfamily. In terms of assembly, homotetramer.

The protein localises to the plastid. The protein resides in the chloroplast. The catalysed reaction is a 2,3-saturated acyl-[ACP] + NAD(+) = a (2E)-enoyl-[ACP] + NADH + H(+). It participates in lipid metabolism; fatty acid biosynthesis. Catalyzes the NAD-dependent reduction of a carbon-carbon double bond in an enoyl moiety that is covalently linked to an acyl carrier protein (ACP). Catalyzes the last reduction step in the de novo synthesis cycle of fatty acids. Involved in the elongation cycle of fatty acids which are used in lipid metabolism. Required for normal plant growth. This chain is Enoyl-[acyl-carrier-protein] reductase [NADH] 1, chloroplastic, found in Oryza sativa subsp. japonica (Rice).